The sequence spans 404 residues: RNA exonuclease 3 (404 aa).

Residues 1–17 (MNNNAQNKRSLDDSNGN) show a composition bias toward polar residues. The segment at 1 to 29 (MNNNAQNKRSLDDSNGNDTKRPKQEDPKY) is disordered. Basic and acidic residues predominate over residues 18–28 (DTKRPKQEDPK). The 149-residue stretch at 241–389 (VLGIDCEMGF…EDSIAAIDIV (149 aa)) folds into the Exonuclease domain.

This sequence belongs to the REXO1/REXO3 family.

It is found in the cytoplasm. The protein localises to the nucleus. In terms of biological role, 3' to 5' exoribonuclease required for proper 3' end maturation of MRP RNA and of the U5L snRNA. In Candida albicans (strain SC5314 / ATCC MYA-2876) (Yeast), this protein is RNA exonuclease 3 (REX3).